Consider the following 838-residue polypeptide: Probable bifunctional folylpolyglutamate synthase/dihydropteroate synthase (838 aa).

The interval 1–418 is folylpolyglutamate synthase; it reads MEYHEAVNFL…LVVGSLYVVA (418 aa). 46–52 contributes to the ATP binding site; sequence GSNGKGS. Residues 541 to 561 form a disordered region; the sequence is AADAGEDDERGAGDASDAGHD. The 251-residue stretch at 569–819 folds into the Pterin-binding domain; sequence TAVMGILNVT…DVPENVAAVN (251 aa). The DHPS stretch occupies residues 571–838; sequence VMGILNVTPN…RFEADAERED (268 aa). Residue Asn-576 coordinates Mg(2+). Residues Thr-616, Asp-649, Asn-668, Asp-738, Lys-774, and 807–809 contribute to the (7,8-dihydropterin-6-yl)methyl diphosphate site; that span reads RVH.

It in the N-terminal section; belongs to the folylpolyglutamate synthase family. This sequence in the C-terminal section; belongs to the DHPS family. Mg(2+) serves as cofactor.

The catalysed reaction is (6S)-5,6,7,8-tetrahydrofolyl-(gamma-L-Glu)(n) + L-glutamate + ATP = (6S)-5,6,7,8-tetrahydrofolyl-(gamma-L-Glu)(n+1) + ADP + phosphate + H(+). The enzyme catalyses (7,8-dihydropterin-6-yl)methyl diphosphate + 4-aminobenzoate = 7,8-dihydropteroate + diphosphate. It functions in the pathway cofactor biosynthesis; tetrahydrofolylpolyglutamate biosynthesis. Its pathway is cofactor biosynthesis; tetrahydrofolate biosynthesis; 7,8-dihydrofolate from 2-amino-4-hydroxy-6-hydroxymethyl-7,8-dihydropteridine diphosphate and 4-aminobenzoate: step 1/2. In terms of biological role, can complement an H.volcanii mutant strain that is thymidine auxotroph because it lacks the two dihydrofolate reductase genes encoded by hdrA and hdrB. This Haloferax volcanii (strain ATCC 29605 / DSM 3757 / JCM 8879 / NBRC 14742 / NCIMB 2012 / VKM B-1768 / DS2) (Halobacterium volcanii) protein is Probable bifunctional folylpolyglutamate synthase/dihydropteroate synthase (folCP).